We begin with the raw amino-acid sequence, 1007 residues long: Serine/threonine-protein kinase PRP4 homolog (1007 aa).

Residues 1–104 (MAATEPPSLR…PAKRTKLDDL (104 aa)) form a disordered region. Position 2 is an N-acetylalanine (A2). A phosphoserine mark is found at S8, S21, S24, and S33. 2 stretches are compositionally biased toward basic residues: residues 40–60 (KHSR…KHKH) and 68–82 (KKHK…HKRK). Positions 83–92 (EVLDASDKEG) are enriched in basic and acidic residues. A phosphoserine mark is found at S88 and S94. K100 is subject to N6-acetyllysine; alternate. Residue K100 forms a Glycyl lysine isopeptide (Lys-Gly) (interchain with G-Cter in SUMO2); alternate linkage. K112 participates in a covalent cross-link: Glycyl lysine isopeptide (Lys-Gly) (interchain with G-Cter in SUMO2). K118 is covalently cross-linked (Glycyl lysine isopeptide (Lys-Gly) (interchain with G-Cter in SUMO2); alternate). Residue K118 forms a Glycyl lysine isopeptide (Lys-Gly) (interchain with G-Cter in SUMO1); alternate linkage. Phosphoserine is present on S132. Y141 bears the Phosphotyrosine mark. 2 disordered regions span residues 141 to 535 (YESG…EDEE) and 560 to 583 (NISV…SPDD). S143, S145, and S167 each carry phosphoserine. Over residues 158–169 (GNRSSTRSSSTR) the composition is skewed to low complexity. Residues K171 and K178 each participate in a glycyl lysine isopeptide (Lys-Gly) (interchain with G-Cter in SUMO2) cross-link. 2 stretches are compositionally biased toward basic residues: residues 180–203 (SAKK…RKSK) and 215–231 (RSKS…SKRS). Phosphoserine is present on residues S240, S242, S258, S278, S292, and S294. Positions 248–271 (RSQEKVGKARSPADEKIKSEEKGK) are enriched in basic and acidic residues. Basic and acidic residues predominate over residues 294–303 (SPVDLRDKSK). Positions 304-315 (DRRSRSKERKSK) are enriched in basic residues. The span at 316 to 325 (RSEIDKEKKP) shows a compositional bias: basic and acidic residues. S328, S354, S356, S366, and S368 each carry phosphoserine. The span at 342 to 367 (PSRRPGRSPKRRSLSPKQRDKSRRSR) shows a compositional bias: basic residues. T385 carries the post-translational modification Phosphothreonine. S387 is subject to Phosphoserine. Composition is skewed to basic and acidic residues over residues 395-408 (RSLE…ERRR) and 415-429 (RPRD…RSKD). Residues S427, S431, and S437 each carry the phosphoserine modification. A compositionally biased stretch (basic residues) spans 438 to 497 (PSRRRSRSPIRRRSRSPLRRSRSPRRRSRSPRRRDRSRRSRSRLRRRSRSRGGHRRRSRS). S518, S519, S520, S565, S569, S576, S578, and S580 each carry phosphoserine. Positions 518 to 535 (SSSDDNLEDFDVEEEDEE) are enriched in acidic residues. The span at 562–581 (SVPSEPSSPQSSTRSRSPSP) shows a compositional bias: low complexity. Glycyl lysine isopeptide (Lys-Gly) (interchain with G-Cter in SUMO2) cross-links involve residues K593 and K659. The region spanning 687–1003 (YNVYGYTGQG…INQALQHAFI (317 aa)) is the Protein kinase domain. ATP is bound by residues 693–701 (TGQGVFSNV) and K717. K717 is modified (N6-acetyllysine). The active-site Proton acceptor is D815. Position 849 is a phosphotyrosine (Y849). Residue S852 is modified to Phosphoserine.

It belongs to the protein kinase superfamily. CMGC Ser/Thr protein kinase family. As to quaternary structure, interacts with CLK1 C-terminus. Associates with the U5 snRNP and NCOR1 deacetylase complexes. Identified in the spliceosome C complex. Phosphorylated by CLK1. Autophosphorylated; phosphorylation inhibits interaction with its targets, such as PRPF6 or SMARCA4.

Its subcellular location is the nucleus. The protein localises to the chromosome. The protein resides in the centromere. It localises to the kinetochore. It carries out the reaction L-seryl-[protein] + ATP = O-phospho-L-seryl-[protein] + ADP + H(+). The catalysed reaction is L-threonyl-[protein] + ATP = O-phospho-L-threonyl-[protein] + ADP + H(+). Serine/threonine kinase involved in spliceosomal assembly as well as mitosis and signaling regulation. Connects chromatin mediated regulation of transcription and pre-mRNA splicing. During spliceosomal assembly, interacts with and phosphorylates PRPF6 and PRPF31, components of the U4/U6-U5 tri-small nuclear ribonucleoprotein (snRNP), to facilitate the formation of the spliceosome B complex. Plays a role in regulating transcription and the spindle assembly checkpoint (SAC). Associates with U5 snRNP and NCOR1 deacetylase complexes which may allow a coordination of pre-mRNA splicing with chromatin remodeling events involved in transcriptional regulation. Associates and probably phosphorylates SMARCA4 and NCOR1. Phosphorylates SRSF1. Associates with kinetochores during mitosis and is necessary for recruitment and maintenance of the checkpoint proteins such as MAD1L1 and MAD12L1 at the kinetochores. Phosphorylates and regulates the activity of the transcription factors such as ELK1 and KLF13. Phosphorylates nuclear YAP1 and WWTR1/TAZ which induces nuclear exclusion and regulates Hippo signaling pathway, involved in tissue growth control. This Rattus norvegicus (Rat) protein is Serine/threonine-protein kinase PRP4 homolog (Prp4k).